Here is a 363-residue protein sequence, read N- to C-terminus: 3,4-dihydroxy-2-butanone 4-phosphate synthase (363 aa).

Positions 1 to 201 (MTLSTAQEII…VADLIEYRNK (201 aa)) are DHBP synthase. Residues 27–28 (RE), Asp-32, 140–144 (RAGHT), and Glu-164 each bind D-ribulose 5-phosphate. A Mg(2+)-binding site is contributed by Glu-28. His-143 is a binding site for Mg(2+). The GTP cyclohydrolase II-like stretch occupies residues 202–363 (YETMIERISE…GLEIVEYVCS (162 aa)).

The protein in the N-terminal section; belongs to the DHBP synthase family. In the C-terminal section; belongs to the GTP cyclohydrolase II family. Mg(2+) is required as a cofactor. Mn(2+) serves as cofactor.

The enzyme catalyses D-ribulose 5-phosphate = (2S)-2-hydroxy-3-oxobutyl phosphate + formate + H(+). The protein operates within cofactor biosynthesis; riboflavin biosynthesis; 2-hydroxy-3-oxobutyl phosphate from D-ribulose 5-phosphate: step 1/1. Its function is as follows. Catalyzes the conversion of D-ribulose 5-phosphate to formate and 3,4-dihydroxy-2-butanone 4-phosphate. The polypeptide is 3,4-dihydroxy-2-butanone 4-phosphate synthase (ribB) (Photobacterium phosphoreum).